Here is a 70-residue protein sequence, read N- to C-terminus: uncharacterized protein (70 aa).

A helical membrane pass occupies residues 14 to 34 (CLVVWFACVYSLLILVVLLLI).

It is found in the virion membrane. This is an uncharacterized protein from Homo sapiens (Human).